The sequence spans 218 residues: GTP cyclohydrolase 1 (218 aa).

Cysteine 109, histidine 112, and cysteine 180 together coordinate Zn(2+).

It belongs to the GTP cyclohydrolase I family. Toroid-shaped homodecamer, composed of two pentamers of five dimers.

It catalyses the reaction GTP + H2O = 7,8-dihydroneopterin 3'-triphosphate + formate + H(+). It participates in cofactor biosynthesis; 7,8-dihydroneopterin triphosphate biosynthesis; 7,8-dihydroneopterin triphosphate from GTP: step 1/1. The sequence is that of GTP cyclohydrolase 1 from Mannheimia succiniciproducens (strain KCTC 0769BP / MBEL55E).